The primary structure comprises 160 residues: Oligoribonuclease (160 aa).

The region spanning 8-158 (LIWIDLEMTG…YNKLKKKTLI (151 aa)) is the Exonuclease domain. Tyr129 is an active-site residue.

It belongs to the oligoribonuclease family.

Its subcellular location is the cytoplasm. 3'-to-5' exoribonuclease specific for small oligoribonucleotides. The chain is Oligoribonuclease (orn) from Buchnera aphidicola subsp. Baizongia pistaciae (strain Bp).